A 483-amino-acid chain; its full sequence is uncharacterized protein (483 aa).

The stretch at 96–137 is one WD repeat; it reads IQCDQDPLSSISWSPSGELLLWSSFDSKITVWSLNTQKGYLL.

This is an uncharacterized protein from Schizosaccharomyces pombe (strain 972 / ATCC 24843) (Fission yeast).